A 280-amino-acid polypeptide reads, in one-letter code: Pantothenate synthetase (280 aa).

30–37 is an ATP binding site; the sequence is MGYLHEGH. The active-site Proton donor is H37. Q61 provides a ligand contact to (R)-pantoate. Q61 serves as a coordination point for beta-alanine. 147-150 is an ATP binding site; the sequence is GQKD. Q153 provides a ligand contact to (R)-pantoate. ATP-binding positions include V176 and 184–187; that span reads MSSR.

It belongs to the pantothenate synthetase family. In terms of assembly, homodimer.

It localises to the cytoplasm. It carries out the reaction (R)-pantoate + beta-alanine + ATP = (R)-pantothenate + AMP + diphosphate + H(+). Its pathway is cofactor biosynthesis; (R)-pantothenate biosynthesis; (R)-pantothenate from (R)-pantoate and beta-alanine: step 1/1. Functionally, catalyzes the condensation of pantoate with beta-alanine in an ATP-dependent reaction via a pantoyl-adenylate intermediate. In Thermotoga neapolitana, this protein is Pantothenate synthetase.